A 344-amino-acid polypeptide reads, in one-letter code: Selenide, water dikinase (344 aa).

Residue C16 is part of the active site. Residues K19 and 47-49 contribute to the ATP site; that span reads SRD. Mg(2+) is bound at residue D50. ATP-binding positions include D67, D90, and 138 to 140; that span reads GHS. D90 is a Mg(2+) binding site. D226 is a Mg(2+) binding site.

The protein belongs to the selenophosphate synthase 1 family. Class I subfamily. As to quaternary structure, homodimer. Requires Mg(2+) as cofactor.

The catalysed reaction is hydrogenselenide + ATP + H2O = selenophosphate + AMP + phosphate + 2 H(+). Its function is as follows. Synthesizes selenophosphate from selenide and ATP. The polypeptide is Selenide, water dikinase (Pseudomonas putida (strain ATCC 47054 / DSM 6125 / CFBP 8728 / NCIMB 11950 / KT2440)).